The following is a 545-amino-acid chain: Glucose-6-phosphate isomerase (545 aa).

Catalysis depends on Glu351, which acts as the Proton donor. Catalysis depends on residues His382 and Lys510.

This sequence belongs to the GPI family.

The protein resides in the cytoplasm. It carries out the reaction alpha-D-glucose 6-phosphate = beta-D-fructose 6-phosphate. Its pathway is carbohydrate biosynthesis; gluconeogenesis. It participates in carbohydrate degradation; glycolysis; D-glyceraldehyde 3-phosphate and glycerone phosphate from D-glucose: step 2/4. Catalyzes the reversible isomerization of glucose-6-phosphate to fructose-6-phosphate. The polypeptide is Glucose-6-phosphate isomerase (Helicobacter pylori (strain P12)).